The primary structure comprises 740 residues: Arf-GAP with coiled-coil, ANK repeat and PH domain-containing protein 1 (740 aa).

The BAR domain maps to 1–226 (MTVKLDFEEC…RKELGTQLHN (226 aa)). The required for formation of endosomal tubules when overexpressed with PIP5K1C stretch occupies residues 1–382 (MTVKLDFEEC…RGPGQVSGYH (382 aa)). Residues 265 to 360 (GLVMEGHLFK…WVSAVQSSIA (96 aa)) enclose the PH domain. The Arf-GAP domain occupies 405-527 (GQVAAQVQSV…KFLTKLPEIR (123 aa)). Positions 405 to 740 (GQVAAQVQSV…SRRSHDLHTL (336 aa)) are required for interaction with GULP1. The segment at 420-443 (CCDCREPAPEWASINLGVTLCIQC) adopts a C4-type zinc-finger fold. Tyr-485 is subject to 3'-nitrotyrosine. Residues 525 to 562 (EIRGRRGGRGPPRGHPPVPPKPPIRPHSGIVRSKSECP) are disordered. A prevents interaction with ITGB1 when S-554 is not phosphorylated region spans residues 525–566 (EIRGRRGGRGPPRGHPPVPPKPPIRPHSGIVRSKSECPSDDM). Over residues 537 to 549 (RGHPPVPPKPPIR) the composition is skewed to pro residues. 3 ANK repeats span residues 606 to 635 (GNAT…NVNQ), 639 to 668 (AGRG…DLGA), and 672 to 702 (EGRD…EAEA).

Banana-shaped homodimer laterally assembling into tetramers, the tetramers further pack helically onto the membrane. Interacts with GTP-bound ARF6. Interacts with third cytoplasmic loop of SLC2A4/GLUT4. Interacts with CLTC. Interacts with GULP1. Forms a complex with GDP-bound ARF6 and GULP1. Interacts with ITGB1; required for ITGB1 recycling.

It is found in the recycling endosome membrane. With respect to regulation, GAP activity stimulated by phosphatidylinositol 4,5-bisphosphate (PIP2) and phosphatidic acid. Its function is as follows. GTPase-activating protein (GAP) for ADP ribosylation factor 6 (ARF6) required for clathrin-dependent export of proteins from recycling endosomes to trans-Golgi network and cell surface. Required for regulated export of ITGB1 from recycling endosomes to the cell surface and ITGB1-dependent cell migration. This Mus musculus (Mouse) protein is Arf-GAP with coiled-coil, ANK repeat and PH domain-containing protein 1 (Acap1).